A 60-amino-acid chain; its full sequence is Large ribosomal subunit protein bL32 (60 aa).

Positions 1–23 (MAVPRNRHSNARKNIRRSHHAKK) are disordered.

This sequence belongs to the bacterial ribosomal protein bL32 family.

The polypeptide is Large ribosomal subunit protein bL32 (Chlamydia caviae (strain ATCC VR-813 / DSM 19441 / 03DC25 / GPIC) (Chlamydophila caviae)).